The chain runs to 153 residues: Ribosome maturation factor RimP (153 aa).

Belongs to the RimP family.

The protein localises to the cytoplasm. Its function is as follows. Required for maturation of 30S ribosomal subunits. The polypeptide is Ribosome maturation factor RimP (Coxiella burnetii (strain CbuK_Q154) (Coxiella burnetii (strain Q154))).